Here is a 424-residue protein sequence, read N- to C-terminus: Gamma-glutamyl phosphate reductase (424 aa).

Residues 1–27 (MSVEAQSRSGAVDTQEPADLREQVHSA) form a disordered region.

This sequence belongs to the gamma-glutamyl phosphate reductase family.

Its subcellular location is the cytoplasm. It carries out the reaction L-glutamate 5-semialdehyde + phosphate + NADP(+) = L-glutamyl 5-phosphate + NADPH + H(+). It functions in the pathway amino-acid biosynthesis; L-proline biosynthesis; L-glutamate 5-semialdehyde from L-glutamate: step 2/2. Functionally, catalyzes the NADPH-dependent reduction of L-glutamate 5-phosphate into L-glutamate 5-semialdehyde and phosphate. The product spontaneously undergoes cyclization to form 1-pyrroline-5-carboxylate. The chain is Gamma-glutamyl phosphate reductase from Mycolicibacterium smegmatis (strain ATCC 700084 / mc(2)155) (Mycobacterium smegmatis).